We begin with the raw amino-acid sequence, 272 residues long: Shikimate dehydrogenase (NADP(+)) (272 aa).

Shikimate is bound by residues 14–16 (SKS) and Thr-61. Lys-65 acts as the Proton acceptor in catalysis. Glu-77 provides a ligand contact to NADP(+). Residues Asn-86 and Asp-102 each coordinate shikimate. Residues 126–130 (GAGGA), 149–154 (NRTVSR), and Met-213 contribute to the NADP(+) site. Tyr-215 contributes to the shikimate binding site. Gly-237 is a binding site for NADP(+).

This sequence belongs to the shikimate dehydrogenase family. As to quaternary structure, homodimer.

It carries out the reaction shikimate + NADP(+) = 3-dehydroshikimate + NADPH + H(+). It functions in the pathway metabolic intermediate biosynthesis; chorismate biosynthesis; chorismate from D-erythrose 4-phosphate and phosphoenolpyruvate: step 4/7. Its function is as follows. Involved in the biosynthesis of the chorismate, which leads to the biosynthesis of aromatic amino acids. Catalyzes the reversible NADPH linked reduction of 3-dehydroshikimate (DHSA) to yield shikimate (SA). In Escherichia coli (strain K12 / MC4100 / BW2952), this protein is Shikimate dehydrogenase (NADP(+)).